The primary structure comprises 828 residues: Transcription factor SOX-6 (828 aa).

The segment at 1–51 is disordered; sequence MSSKQATSPFACAADGEDAMTQDLTSREKEEGSDQHVASHLPLHPIMHNKP. Positions 25-34 are enriched in basic and acidic residues; that stretch reads TSREKEEGSD. At Thr119 the chain carries Phosphothreonine. Positions 184–262 form a coiled coil; that stretch reads LAEKERQLST…LLQQQIQVQG (79 aa). A disordered region spans residues 380-470; that stretch reads SPGAKMPSTP…KSSIPSPIGG (91 aa). Residues 393-402 show a composition bias toward polar residues; that stretch reads NTAGTVSPTG. Phosphoserine is present on Ser399. A Phosphothreonine modification is found at Thr401. Residues Lys404 and Lys417 each participate in a glycyl lysine isopeptide (Lys-Gly) (interchain with G-Cter in SUMO) cross-link. Phosphoserine is present on residues Ser439 and Ser442. Residues 439–461 show a composition bias toward polar residues; the sequence is SPTSPTQNLFPASKTSPVNLPNK. A DNA-binding region (HMG box) is located at residues 621-689; it reads IKRPMNAFMV…IHLEKYPNYK (69 aa). A compositionally biased stretch (polar residues) spans 753–781; it reads TPSPQMTSDCSSTSASPEPSLPVIQSTYG. The interval 753 to 828 is disordered; sequence TPSPQMTSDC…NEAPEAVSAN (76 aa). The span at 796–809 shows a compositional bias: acidic residues; the sequence is NGEDEMEMYDDYED.

As to quaternary structure, homodimer. Interacts with DAZAP2. May interact with CENPK. Sumoylation inhibits the transcriptional activity. Expressed in a wide variety of tissues, most abundantly in skeletal musclen.

Its subcellular location is the nucleus. It is found in the cytoplasm. Functionally, transcription factor that plays a key role in several developmental processes, including neurogenesis, chondrocytes differentiation and cartilage formation. Specifically binds the 5'-AACAAT-3' DNA motif present in enhancers and super-enhancers and promotes expression of genes important for chondrogenesis. Required for overt chondrogenesis when condensed prechondrocytes differentiate into early stage chondrocytes: SOX5 and SOX6 cooperatively bind with SOX9 on active enhancers and super-enhancers associated with cartilage-specific genes, and thereby potentiate SOX9's ability to transactivate. Not involved in precartilaginous condensation, the first step in chondrogenesis, during which skeletal progenitors differentiate into prechondrocytes. Together with SOX5, required to form and maintain a pool of highly proliferating chondroblasts between epiphyses and metaphyses, to form columnar chondroblasts, delay chondrocyte prehypertrophy but promote hypertrophy, and to delay terminal differentiation of chondrocytes on contact with ossification fronts. Binds to the proximal promoter region of the myelin protein MPZ gene, and is thereby involved in the differentiation of oligodendroglia in the developing spinal tube. Binds to the gene promoter of MBP and acts as a transcriptional repressor. In Homo sapiens (Human), this protein is Transcription factor SOX-6.